The sequence spans 273 residues: Large ribosomal subunit protein uL2 (273 aa).

The disordered stretch occupies residues 196 to 273 (GNSDHGLESS…SSKYIIERRK (78 aa)). Basic residues-rich tracts occupy residues 209–220 (GRTRWMGRRPRN) and 255–264 (LKTRAPKKQS).

It belongs to the universal ribosomal protein uL2 family. Part of the 50S ribosomal subunit. Forms a bridge to the 30S subunit in the 70S ribosome.

Its function is as follows. One of the primary rRNA binding proteins. Required for association of the 30S and 50S subunits to form the 70S ribosome, for tRNA binding and peptide bond formation. It has been suggested to have peptidyltransferase activity; this is somewhat controversial. Makes several contacts with the 16S rRNA in the 70S ribosome. In Phocaeicola vulgatus (strain ATCC 8482 / DSM 1447 / JCM 5826 / CCUG 4940 / NBRC 14291 / NCTC 11154) (Bacteroides vulgatus), this protein is Large ribosomal subunit protein uL2.